Consider the following 593-residue polypeptide: Prospero homeobox protein 2 (593 aa).

Disordered regions lie at residues Cys-24 to Ser-48, Ser-79 to Arg-130, Thr-153 to Cys-199, Gln-260 to Lys-284, Pro-298 to Leu-333, and Gly-356 to Leu-388. The segment covering Arg-87–Arg-99 has biased composition (basic and acidic residues). A compositionally biased stretch (low complexity) spans Pro-167 to Ser-181. Over residues Trp-363 to Glu-380 the composition is skewed to polar residues. The Prospero-type homeo domain maps to Gln-433 to Met-491. A homeo-Prospero region spans residues Gln-433–Phe-591. A Prospero domain is found at Glu-492–Phe-591.

It belongs to the Prospero homeodomain family. Expressed in testis.

The protein localises to the nucleus. In terms of biological role, transcription regulator. Does not seem to be essential for embryonic development and postnatal survival. This chain is Prospero homeobox protein 2 (Prox2), found in Mus musculus (Mouse).